A 75-amino-acid polypeptide reads, in one-letter code: DNA-directed RNA polymerase subunit Rpo5 (75 aa).

This sequence belongs to the archaeal Rpo5/eukaryotic RPB5 RNA polymerase subunit family. In terms of assembly, part of the RNA polymerase complex.

It is found in the cytoplasm. It carries out the reaction RNA(n) + a ribonucleoside 5'-triphosphate = RNA(n+1) + diphosphate. In terms of biological role, DNA-dependent RNA polymerase (RNAP) catalyzes the transcription of DNA into RNA using the four ribonucleoside triphosphates as substrates. This is DNA-directed RNA polymerase subunit Rpo5 from Pyrobaculum aerophilum (strain ATCC 51768 / DSM 7523 / JCM 9630 / CIP 104966 / NBRC 100827 / IM2).